The chain runs to 163 residues: MTVTDDYLANNVDYASGFKGPLPMPPSKHIAIVACMDARLDVYRMLGIKEGEAHVIRNAGCVVTDDVIRSLAISQRLLGTREIILLHHTDCGMLTFTDDDFKRAIQDETGIRPTWSPESYPDAVEDVRQSLRRIEVNPFVTKHTSLRGFVFDVATGKLNEVTP.

Cys-35, Asp-37, His-88, and Cys-91 together coordinate Zn(2+).

Belongs to the beta-class carbonic anhydrase family. As to quaternary structure, homotetramer. Zn(2+) is required as a cofactor.

It carries out the reaction hydrogencarbonate + H(+) = CO2 + H2O. Catalyzes the reversible hydration of carbon dioxide to form bicarbonate. The chain is Beta-carbonic anhydrase 1 from Mycobacterium bovis (strain ATCC BAA-935 / AF2122/97).